The primary structure comprises 159 residues: 17 kDa surface antigen (159 aa).

A signal peptide spans 1–19 (MKIISKIIVILLAASMLQA). A lipid anchor (N-palmitoyl cysteine) is attached at Cys-20. A lipid anchor (S-diacylglycerol cysteine) is attached at Cys-20.

The protein belongs to the rickettsiale 17 kDa surface antigen family.

It localises to the cell outer membrane. This chain is 17 kDa surface antigen (omp), found in Rickettsia bellii.